The sequence spans 336 residues: MKSAKKLLSVLCLGIFILTFTACDMVEKTPEAKAKSTIAKVNGEKIQRKDLDESPSMQQVLSQIKTQYGEEFEKSEQGKEVIKEQKKQILENLITEKVLLQKGKELKVIPKDEELNKEADKKVNEIKAVYNNDEKKFEETLKSTGFTKETLKEYLKDQIVIEKVINEVTKDVKVEDKDAQKYYNENQSMFTEKPNTMNVSHILVKTEDEAKKVKKRLDAKEDFAKVAKEVSQDTGSKDKGGLLGDISYSDSNFDPTFMKAAIALKSGAISNPVHTQFGYHIIKINSKKEYPVKKFDSVKEDIKKQLKQEKQQEAYTKKIEEWKKASKIKTYEKNLL.

The signal sequence occupies residues Met1–Ala22. The N-palmitoyl cysteine moiety is linked to residue Cys23. A lipid anchor (S-diacylglycerol cysteine) is attached at Cys23. The 93-residue stretch at Pro194–Ser286 folds into the PpiC domain.

Belongs to the PrsA family.

It is found in the cell membrane. The enzyme catalyses [protein]-peptidylproline (omega=180) = [protein]-peptidylproline (omega=0). In terms of biological role, plays a major role in protein secretion by helping the post-translocational extracellular folding of several secreted proteins. In Clostridium botulinum (strain Okra / Type B1), this protein is Foldase protein PrsA.